Consider the following 69-residue polypeptide: MAQDLSEKELLRMEVEQLKKEVKNPRDLISKTGKEIKDYVEAQAGTDPLLKGIPEDKNPFKEKGTCVLS.

Position 66 is a cysteine methyl ester (Cys-66). Cys-66 carries the S-farnesyl cysteine lipid modification. A propeptide spans 67-69 (VLS) (removed in mature form).

The protein belongs to the G protein gamma family. As to quaternary structure, g proteins are composed of 3 units, alpha, beta and gamma.

The protein localises to the cell membrane. Guanine nucleotide-binding proteins (G proteins) are involved as a modulator or transducer in various transmembrane signaling systems. The beta and gamma chains are required for the GTPase activity, for replacement of GDP by GTP, and for G protein-effector interaction. The polypeptide is Guanine nucleotide-binding protein G(I)/G(S)/G(O) subunit gamma-T2 (Gngt2) (Mus musculus (Mouse)).